A 124-amino-acid polypeptide reads, in one-letter code: Urease subunit beta (124 aa).

The protein belongs to the urease beta subunit family. As to quaternary structure, heterotrimer of UreA (gamma), UreB (beta) and UreC (alpha) subunits. Three heterotrimers associate to form the active enzyme.

The protein localises to the cytoplasm. It catalyses the reaction urea + 2 H2O + H(+) = hydrogencarbonate + 2 NH4(+). Its pathway is nitrogen metabolism; urea degradation; CO(2) and NH(3) from urea (urease route): step 1/1. The chain is Urease subunit beta from Ureaplasma urealyticum serovar 10 (strain ATCC 33699 / Western).